Here is a 626-residue protein sequence, read N- to C-terminus: Basic helix-loop-helix ARNT-like protein 1 (626 aa).

The disordered stretch occupies residues 1–60; it reads MADQRMDISSTISDFMSPGATDLLSSPLGTSGMDCNRKRKGSSTDYQESMDTDKDDPHGR. Position 17 is a phosphoserine; by GSK3-beta (serine 17). Threonine 21 bears the Phosphothreonine; by GSK3-beta mark. The Nuclear localization signal motif lies at 36–41; that stretch reads NRKRKG. Positions 51–60 are enriched in basic and acidic residues; that stretch reads DTDKDDPHGR. A bHLH domain is found at 72–125; that stretch reads NAREAHSQIEKRRRDKMNSFIDELASLVPTCNAMSRKLDKLTVLRMAVQHMKTL. Phosphoserine is present on serine 78. Serine 90 carries the phosphoserine; by CK2 modification. The short motif at 142-152 is the Nuclear export signal 1 element; it reads LSDDELKHLIL. The PAS 1 domain occupies 143-215; the sequence is SDDELKHLIL…EQLSSSDTAP (73 aa). Lysine 252 is covalently cross-linked (Glycyl lysine isopeptide (Lys-Gly) (interchain with G-Cter in SUMO2 and SUMO3)). Residue lysine 259 forms a Glycyl lysine isopeptide (Lys-Gly) (interchain with G-Cter in SUMO); alternate linkage. A Glycyl lysine isopeptide (Lys-Gly) (interchain with G-Cter in SUMO2); alternate cross-link involves residue lysine 259. In terms of domain architecture, PAS 2 spans 326-396; that stretch reads PQPVNGEIRV…ECHRQVLQTR (71 aa). Residues 361–369 carry the Nuclear export signal 2 motif; that stretch reads LAYLPQELL. The PAC domain occupies 401-444; sequence TNCYKFKIKDGSFITLRSRWFSFMNPWTKEVEYIVSTNTVVLAN. Disordered stretches follow at residues 457–493 and 510–597; these read TASPHSMDSMLPSGEGGPKRTHPTVPGIPGGTRAGAG and RGSS…SNDE. Residues 484 to 493 are compositionally biased toward gly residues; the sequence is IPGGTRAGAG. The tract at residues 508–588 is interaction with CIART; sequence RIRGSSPSSC…IGIDMIDNDQ (81 aa). Residues 511–521 are compositionally biased toward low complexity; it reads GSSPSSCGSSP. At lysine 538 the chain carries N6-acetyllysine.

In terms of assembly, component of the circadian clock oscillator which includes the CRY1/2 proteins, CLOCK or NPAS2, BMAL1 or BMAL2, CSNK1D and/or CSNK1E, TIMELESS and the PER1/2/3 proteins. Forms a heterodimer with CLOCK. The CLOCK-BMAL1 heterodimer is required for E-box-dependent transactivation, for CLOCK nuclear translocation and degradation, and, for phosphorylation of both CLOCK and BMAL1. Part of a nuclear complex which also includes RACK1 and PRKCA; RACK1 and PRKCA are recruited to the complex in a circadian manner. Interacts with NPAS2. Interacts with EZH2. Interacts with SUMO3. Interacts with SIRT1. Interacts with AHR. Interacts with ID1, ID2 and ID3. Interacts with DDX4. Interacts with OGT. Interacts with EED and SUZ12. Interacts with MTA1. Interacts with CIART. Interacts with HSP90. Interacts with KAT2B and EP300. Interacts with BHLHE40/DEC1 and BHLHE41/DEC2. Interacts with RELB and the interaction is enhanced in the presence of CLOCK. Interacts with PER1, PER2, CRY1 and CRY2 and this interaction requires a translocation to the nucleus. Interaction of the CLOCK-BMAL1 heterodimer with PER or CRY inhibits transcription activation. Interaction of the CLOCK-BMAL1 with CRY1 is independent of DNA but with PER2 is off DNA. The CLOCK-BMAL1 heterodimer interacts with GSK3B. Interacts with KDM5A. Interacts with KMT2A; in a circadian manner. Interacts with UBE3A. Interacts with PRKCG. Interacts with MAGEL2. Interacts with NCOA2. Interacts with THRAP3. The CLOCK-BMAL1 heterodimer interacts with PASD1. Interacts with PASD1. Interacts with USP9X. Interacts with PIWIL2 (via PIWI domain). Interacts with HDAC3. Interacts with HNF4A. Ubiquitinated, leading to its proteasomal degradation. Deubiquitinated by USP9X. Post-translationally, O-glycosylated; contains O-GlcNAc. O-glycosylation by OGT prevents protein degradation by inhibiting ubiquitination. It also stabilizes the CLOCK-BMAL1 heterodimer thereby increasing CLOCK-BMAL1-mediated transcription of genes in the negative loop of the circadian clock such as PER1/2/3 and CRY1/2. In terms of processing, acetylated on Lys-538 by CLOCK during the repression phase of the circadian cycle. Acetylation facilitates recruitment of CRY1 protein and initiates the repression phase of the circadian cycle. Acetylated at Lys-538 by KAT5 during the activation phase of the cycle, leading to recruitment of the positive transcription elongation factor b (P-TEFb) and BRD4, followed by productive elongation of circadian transcripts. Deacetylated by SIRT1, which may result in decreased protein stability. Phosphorylated upon dimerization with CLOCK. Phosphorylation enhances the transcriptional activity, alters the subcellular localization and decreases the stability of the CLOCK-BMAL1 heterodimer by promoting its degradation. Phosphorylation shows circadian variations in the liver with a peak between CT10 to CT14. Phosphorylation at Ser-90 by CK2 is essential for its nuclear localization, its interaction with CLOCK and controls CLOCK nuclear entry. Dephosphorylation at Ser-78 is important for dimerization with CLOCK and transcriptional activity. Post-translationally, sumoylated on Lys-259 upon dimerization with CLOCK. Predominantly conjugated to poly-SUMO2/3 rather than SUMO1 and the level of these conjugates undergo rhythmic variation, peaking at CT9-CT12. Sumoylation localizes it exclusively to the PML body and promotes its ubiquitination in the PML body, ubiquitin-dependent proteasomal degradation and the transcriptional activity of the CLOCK-BMAL1 heterodimer. In terms of processing, undergoes lysosome-mediated degradation in a time-dependent manner in the liver.

The protein resides in the nucleus. Its subcellular location is the cytoplasm. The protein localises to the PML body. Its function is as follows. Transcriptional activator which forms a core component of the circadian clock. The circadian clock, an internal time-keeping system, regulates various physiological processes through the generation of approximately 24 hour circadian rhythms in gene expression, which are translated into rhythms in metabolism and behavior. It is derived from the Latin roots 'circa' (about) and 'diem' (day) and acts as an important regulator of a wide array of physiological functions including metabolism, sleep, body temperature, blood pressure, endocrine, immune, cardiovascular, and renal function. Consists of two major components: the central clock, residing in the suprachiasmatic nucleus (SCN) of the brain, and the peripheral clocks that are present in nearly every tissue and organ system. Both the central and peripheral clocks can be reset by environmental cues, also known as Zeitgebers (German for 'timegivers'). The predominant Zeitgeber for the central clock is light, which is sensed by retina and signals directly to the SCN. The central clock entrains the peripheral clocks through neuronal and hormonal signals, body temperature and feeding-related cues, aligning all clocks with the external light/dark cycle. Circadian rhythms allow an organism to achieve temporal homeostasis with its environment at the molecular level by regulating gene expression to create a peak of protein expression once every 24 hours to control when a particular physiological process is most active with respect to the solar day. Transcription and translation of core clock components (CLOCK, NPAS2, BMAL1, BMAL2, PER1, PER2, PER3, CRY1 and CRY2) plays a critical role in rhythm generation, whereas delays imposed by post-translational modifications (PTMs) are important for determining the period (tau) of the rhythms (tau refers to the period of a rhythm and is the length, in time, of one complete cycle). A diurnal rhythm is synchronized with the day/night cycle, while the ultradian and infradian rhythms have a period shorter and longer than 24 hours, respectively. Disruptions in the circadian rhythms contribute to the pathology of cardiovascular diseases, cancer, metabolic syndromes and aging. A transcription/translation feedback loop (TTFL) forms the core of the molecular circadian clock mechanism. Transcription factors, CLOCK or NPAS2 and BMAL1 or BMAL2, form the positive limb of the feedback loop, act in the form of a heterodimer and activate the transcription of core clock genes and clock-controlled genes (involved in key metabolic processes), harboring E-box elements (5'-CACGTG-3') within their promoters. The core clock genes: PER1/2/3 and CRY1/2 which are transcriptional repressors form the negative limb of the feedback loop and interact with the CLOCK|NPAS2-BMAL1|BMAL2 heterodimer inhibiting its activity and thereby negatively regulating their own expression. This heterodimer also activates nuclear receptors NR1D1, NR1D2, RORA, RORB and RORG, which form a second feedback loop and which activate and repress BMAL1 transcription, respectively. BMAL1 positively regulates myogenesis and negatively regulates adipogenesis via the transcriptional control of the genes of the canonical Wnt signaling pathway. Plays a role in normal pancreatic beta-cell function; regulates glucose-stimulated insulin secretion via the regulation of antioxidant genes NFE2L2/NRF2 and its targets SESN2, PRDX3, CCLC and CCLM. Negatively regulates the mTORC1 signaling pathway; regulates the expression of MTOR and DEPTOR. Controls diurnal oscillations of Ly6C inflammatory monocytes; rhythmic recruitment of the PRC2 complex imparts diurnal variation to chemokine expression that is necessary to sustain Ly6C monocyte rhythms. Regulates the expression of HSD3B2, STAR, PTGS2, CYP11A1, CYP19A1 and LHCGR in the ovary and also the genes involved in hair growth. Plays an important role in adult hippocampal neurogenesis by regulating the timely entry of neural stem/progenitor cells (NSPCs) into the cell cycle and the number of cell divisions that take place prior to cell-cycle exit. Regulates the circadian expression of CIART. The CLOCK-BMAL1 heterodimer regulates the circadian expression of SERPINE1/PAI1, VWF, B3, CCRN4L/NOC, NAMPT, DBP, MYOD1, PPARGC1A, PPARGC1B, SIRT1, GYS2, F7, NGFR, GNRHR, BHLHE40/DEC1, ATF4, MTA1 and also genes implicated in glucose and lipid metabolism. Promotes rhythmic chromatin opening, regulating the DNA accessibility of other transcription factors. The NPAS2-BMAL1 heterodimer positively regulates the expression of MAOA, F7 and LDHA and modulates the circadian rhythm of daytime contrast sensitivity by regulating the rhythmic expression of adenylate cyclase type 1 (ADCY1) in the retina. The preferred binding motif for the CLOCK-BMAL1 heterodimer is 5'-CACGTGA-3', which contains a flanking adenine nucleotide at the 3-prime end of the canonical 6-nucleotide E-box sequence. CLOCK specifically binds to the half-site 5'-CAC-3', while BMAL1 binds to the half-site 5'-GTGA-3'. The CLOCK-BMAL1 heterodimer also recognizes the non-canonical E-box motifs 5'-AACGTGA-3' and 5'-CATGTGA-3'. Essential for the rhythmic interaction of CLOCK with ASS1 and plays a critical role in positively regulating CLOCK-mediated acetylation of ASS1. Plays a role in protecting against lethal sepsis by limiting the expression of immune checkpoint protein CD274 in macrophages in a PKM2-dependent manner. Regulates the diurnal rhythms of skeletal muscle metabolism via transcriptional activation of genes promoting triglyceride synthesis (DGAT2) and metabolic efficiency (COQ10B). The chain is Basic helix-loop-helix ARNT-like protein 1 (BMAL1) from Equus caballus (Horse).